The chain runs to 358 residues: Nuclear receptor subfamily 1 group I member 3 (358 aa).

Positions 18–93 (PRNCVVCGDR…VGMRKDMILS (76 aa)) form a DNA-binding region, nuclear receptor. The segment at 21–41 (CVVCGDRATGYHFHALTCEGC) adopts an NR C4-type zinc-finger fold. The residue at position 48 (Thr-48) is a Phosphothreonine; by PKC. The segment at 57–81 (CPFAGRCEVSKAQRRHCPACRLQKC) adopts an NR C4-type zinc-finger fold. The NR LBD domain occupies 119 to 358 (QQKELVQILL…MTPLLGEICS (240 aa)).

Belongs to the nuclear hormone receptor family. NR1 subfamily. As to quaternary structure, heterodimer of NR1I3 and RXR. Interacts with PSMC4. Interacts with ECT2. Directly interacts with DNAJC7; this complex may also include HSP90. Interacts with CRY1. Interacts with CRY2 in a ligand-dependent manner. Post-translationally, phosphorylated at Thr-48 by PKC, dephosphorylation of Thr-48 is required for nuclear translocation and activation. In terms of tissue distribution, predominantly expressed in liver.

It is found in the nucleus. Its subcellular location is the cytoplasm. The protein resides in the cytoskeleton. Binds and transactivates the retinoic acid response elements that control expression of the retinoic acid receptor beta 2 and alcohol dehydrogenase 3 genes. Transactivates both the phenobarbital responsive element module of the human CYP2B6 gene and the CYP3A4 xenobiotic response element. In Mus musculus (Mouse), this protein is Nuclear receptor subfamily 1 group I member 3 (Nr1i3).